Consider the following 184-residue polypeptide: Putative DNA-directed RNA polymerase subunit 454R (184 aa).

The protein belongs to the archaeal Rpo5/eukaryotic RPB5 RNA polymerase subunit family.

Component of the DNA-dependent RNA polymerase that catalyzes the transcription in the cytoplasm of viral DNA into RNA using the four ribonucleoside triphosphates as substrates. This chain is Putative DNA-directed RNA polymerase subunit 454R, found in Invertebrate iridescent virus 6 (IIV-6).